The primary structure comprises 100 residues: Aspartyl/glutamyl-tRNA(Asn/Gln) amidotransferase subunit C (100 aa).

The protein belongs to the GatC family. As to quaternary structure, heterotrimer of A, B and C subunits.

The catalysed reaction is L-glutamyl-tRNA(Gln) + L-glutamine + ATP + H2O = L-glutaminyl-tRNA(Gln) + L-glutamate + ADP + phosphate + H(+). The enzyme catalyses L-aspartyl-tRNA(Asn) + L-glutamine + ATP + H2O = L-asparaginyl-tRNA(Asn) + L-glutamate + ADP + phosphate + 2 H(+). In terms of biological role, allows the formation of correctly charged Asn-tRNA(Asn) or Gln-tRNA(Gln) through the transamidation of misacylated Asp-tRNA(Asn) or Glu-tRNA(Gln) in organisms which lack either or both of asparaginyl-tRNA or glutaminyl-tRNA synthetases. The reaction takes place in the presence of glutamine and ATP through an activated phospho-Asp-tRNA(Asn) or phospho-Glu-tRNA(Gln). The chain is Aspartyl/glutamyl-tRNA(Asn/Gln) amidotransferase subunit C from Streptococcus agalactiae serotype Ia (strain ATCC 27591 / A909 / CDC SS700).